A 771-amino-acid chain; its full sequence is UPF0313 protein PSPTO_4928 (771 aa).

One can recognise a Radical SAM core domain in the interval 371 to 649; the sequence is AYDMIRFSVN…KAFLRYHDPK (279 aa). Residues C385, C389, and C392 each coordinate [4Fe-4S] cluster. Residues 683 to 771 form a disordered region; it reads DTYQSARRKN…KPARKPVVPR (89 aa). Basic and acidic residues-rich tracts occupy residues 726–735 and 745–754; these read KPWDKREEAK and AAKERMDAAK. The segment covering 756–765 has biased composition (basic residues); that stretch reads GKGKGGKPAR.

The protein belongs to the UPF0313 family. The cofactor is [4Fe-4S] cluster.

The chain is UPF0313 protein PSPTO_4928 from Pseudomonas syringae pv. tomato (strain ATCC BAA-871 / DC3000).